A 1651-amino-acid polypeptide reads, in one-letter code: MKSIGIFVVALWLTHFCDGGQLGARIYSSGSESSVLLFDQYINKYAFTNGDVKIIYEGKSIFEILSETYVTDFNIFDRAISQDNLDMFQIVQFPLAGQAIVMTYNLPELVNSSYRLVIDRETLGKIWYGAISKWNDTAIQNLNPTVGHLLPDTDIILGYSDDYIMTISGLIKMALSSFSPEFDTELKYANNTFNGMNPTKNGRGHNIGETSTVRLEWLKKTSYGLTYINYADVYNNGTDSTVPMNMYNKAGYFVEPNLVSVQAAMSDFKIFYANNNSTIDIYDAPGNKSWPLAYVNYLGCSSAFGPMADCTRTIQMTNFIAWIYTNDAASESAIELQFYPLDKTLQKVAIDNLYNIKCNNIAVLSQQYLIGFGAPISVMSLWPNSWTTVASTARYYSAPSSQALELQETYGADFGITVTGVPNTYFNKMPDLGVMPLAAFTIVPAYNIPAINGTNGTLILDYEIITDIYLGIINNWNDSRIRALNGIEINRKLPNVSITVIYQAVSSDYNFMFTDFMSKKSPKFAKKIGSTYFPILTLPNNSMIITTDIYDVGNQLISNSNSFAFWPYFGITMLSRQPTVQAASIRTEKGNIISSNSTTLEKAINNFISKGGSIEDAPYIMGENDESWPLSALMTMIYRQSTIHYAAKAAAVADFAYWTQSNPTAINIATIQGMYVASNNPTLKSRNLNLLKNFVVDGEPISSIANCIYQGTICSDMGTCNNNSCLCNSYRKGIYCENIVSSSGESIGIILAIVIPVSFVICCIIIVLVIALIVSIRLHQRVEDEWEVDFHELDFMESLGSGGSGEVFKAMWKGTEVAVKKLVNSNITKDAERNFKQEIHRMTSLRHPNVVLFMAASTRPPNMCIVMEFMSLGSLYDLLGNELVTEIPPVLRIRIAYQAAKGMHFLHSSDIVHRDLKSLNLLLDSKWNVKVSDFGLTKIKDNNKGKSSTKEDSVCSIQWTAPEVLSEKQDIDYILADVYSFGIIMWELMTRLRPYIGLSPAAIAVAVIRDNLRPEIQEEDINLMSSDYVELVNICWHKDTMIRPSFLEIMTKLSTLIGGSGITTGTSTSSSNQSSDYIGPNIITRTKNIHNNDETKNSFGSTTYGSNTISSSSNTESDKILSKLNKKKIPTGEVIIVFTDIISAEQLWHHNPLAMKNATVLYNAVIRETLDKIGGYESFIYKDHNSGEGSFCLVFQEAIDAIDFCSISQKKLLEIDWPEELLDHPAAASEKDINGTMIFAGPRVRMGLHAGTVKIMQDPVTRRYEYSGVTVNIAAKITMMTHGGQVIMSEQVTDKISNNDCSNIKSLGQIEITDTNNYKVNIFELRIEGLIGRFFGGVAFYNYDSVTESTDLDDTYPDSLNFSTNGILYGGIKQENEYLSSAGLCRWIINYDDIQIGKQIGVGSYGIVNMGKWKNINVAVKKFVKQKIDEKQMLEFRAEIAFLSQLRHPHIILMIGACLKRPNICIVTEFMGNGSLRNVIKTTKPEWKLKIKMLYQTALGIGYLHNSDPIIIHRDIKPSNILVDDSMNVKIADFGFARIKEENSVMTRCGTPCWTAPEIIRGEKYTEKVDVFSFGIVMWEVLTCKEPFSGCNFMKVSMDILEGARPQIPSDCPIDFTKLMKQCWHAKPDKRPSMEDVIMGLNDMLGPEKSL.

Positions 1 to 19 (MKSIGIFVVALWLTHFCDG) are cleaved as a signal peptide. 14 N-linked (GlcNAc...) asparagine; by host glycosylation sites follow: Asn-111, Asn-135, Asn-190, Asn-236, Asn-275, Asn-276, Asn-287, Asn-452, Asn-455, Asn-477, Asn-495, Asn-540, Asn-596, and Asn-722. A helical transmembrane segment spans residues 749-769 (IILAIVIPVSFVICCIIIVLV). The Protein kinase 1 domain occupies 793 to 1057 (LDFMESLGSG…EIMTKLSTLI (265 aa)). Residues 799-807 (LGSGGSGEV) and Lys-820 contribute to the ATP site. Asp-915 (proton acceptor) is an active-site residue. The tract at residues 1089–1115 (IHNNDETKNSFGSTTYGSNTISSSSNT) is disordered. Over residues 1100 to 1115 (GSTTYGSNTISSSSNT) the composition is skewed to low complexity. In terms of domain architecture, Guanylate cyclase spans 1135–1278 (IIVFTDIISA…VTVNIAAKIT (144 aa)). Residues 1394–1645 (IQIGKQIGVG…DVIMGLNDML (252 aa)) form the Protein kinase 2 domain. ATP is bound by residues 1400-1408 (IGVGSYGIV) and Lys-1421. Catalysis depends on Asp-1515, which acts as the Proton acceptor.

It is found in the membrane. The catalysed reaction is L-seryl-[protein] + ATP = O-phospho-L-seryl-[protein] + ADP + H(+). It catalyses the reaction L-threonyl-[protein] + ATP = O-phospho-L-threonyl-[protein] + ADP + H(+). The protein is Putative serine/threonine-protein kinase/receptor R818 of Acanthamoeba polyphaga mimivirus (APMV).